Here is a 337-residue protein sequence, read N- to C-terminus: N-acetyl-gamma-glutamyl-phosphate reductase (337 aa).

The active site involves Cys155.

The protein belongs to the NAGSA dehydrogenase family. Type 1 subfamily.

The protein resides in the cytoplasm. It catalyses the reaction N-acetyl-L-glutamate 5-semialdehyde + phosphate + NADP(+) = N-acetyl-L-glutamyl 5-phosphate + NADPH + H(+). It functions in the pathway amino-acid biosynthesis; L-arginine biosynthesis; N(2)-acetyl-L-ornithine from L-glutamate: step 3/4. Functionally, catalyzes the NADPH-dependent reduction of N-acetyl-5-glutamyl phosphate to yield N-acetyl-L-glutamate 5-semialdehyde. The polypeptide is N-acetyl-gamma-glutamyl-phosphate reductase (Alteromonas mediterranea (strain DSM 17117 / CIP 110805 / LMG 28347 / Deep ecotype)).